We begin with the raw amino-acid sequence, 322 residues long: Cytochrome c biogenesis protein CcsA (322 aa).

8 helical membrane passes run 6-26, 45-65, 69-89, 97-117, 144-164, 230-250, 265-285, and 291-311; these read LQLI…FLFF, LIAN…AGYF, NLYE…LFLY, LLDN…HFIL, MISY…LYFL, LITF…VWAN, WALI…IKGW, and AMVA…VNLL.

Belongs to the CcmF/CycK/Ccl1/NrfE/CcsA family. In terms of assembly, may interact with Ccs1.

It is found in the plastid. The protein resides in the cyanelle thylakoid membrane. In terms of biological role, required during biogenesis of c-type cytochromes (cytochrome c6 and cytochrome f) at the step of heme attachment. This Cyanophora paradoxa protein is Cytochrome c biogenesis protein CcsA.